Reading from the N-terminus, the 400-residue chain is Dual-specificity RNA methyltransferase RlmN (400 aa).

Residue Glu-125 is the Proton acceptor of the active site. The Radical SAM core domain maps to 131–372 (ETDRGTLCVS…VRTPRGRDIL (242 aa)). Residues Cys-138 and Cys-375 are joined by a disulfide bond. 3 residues coordinate [4Fe-4S] cluster: Cys-145, Cys-149, and Cys-152. S-adenosyl-L-methionine-binding positions include 201–202 (GE), Ser-233, 255–257 (SLH), and Asn-332. The active-site S-methylcysteine intermediate is Cys-375.

This sequence belongs to the radical SAM superfamily. RlmN family. Requires [4Fe-4S] cluster as cofactor.

The protein localises to the cytoplasm. The catalysed reaction is adenosine(2503) in 23S rRNA + 2 reduced [2Fe-2S]-[ferredoxin] + 2 S-adenosyl-L-methionine = 2-methyladenosine(2503) in 23S rRNA + 5'-deoxyadenosine + L-methionine + 2 oxidized [2Fe-2S]-[ferredoxin] + S-adenosyl-L-homocysteine. The enzyme catalyses adenosine(37) in tRNA + 2 reduced [2Fe-2S]-[ferredoxin] + 2 S-adenosyl-L-methionine = 2-methyladenosine(37) in tRNA + 5'-deoxyadenosine + L-methionine + 2 oxidized [2Fe-2S]-[ferredoxin] + S-adenosyl-L-homocysteine. Its function is as follows. Specifically methylates position 2 of adenine 2503 in 23S rRNA and position 2 of adenine 37 in tRNAs. m2A2503 modification seems to play a crucial role in the proofreading step occurring at the peptidyl transferase center and thus would serve to optimize ribosomal fidelity. The sequence is that of Dual-specificity RNA methyltransferase RlmN from Bradyrhizobium diazoefficiens (strain JCM 10833 / BCRC 13528 / IAM 13628 / NBRC 14792 / USDA 110).